The primary structure comprises 227 residues: uncharacterized protein (227 aa).

7 helical membrane-spanning segments follow: residues F15–Y34, T55–V77, A92–L114, F121–L140, L145–S167, P180–L202, and F206–L224.

The protein localises to the cell membrane. This is an uncharacterized protein from Archaeoglobus fulgidus (strain ATCC 49558 / DSM 4304 / JCM 9628 / NBRC 100126 / VC-16).